A 303-amino-acid chain; its full sequence is Tyrosine recombinase XerC (303 aa).

One can recognise a Core-binding (CB) domain in the interval 1–85 (MRADLDAFLE…ATRGLYQYLL (85 aa)). One can recognise a Tyr recombinase domain in the interval 106 to 285 (KLPRTLDADR…DFQHLASVYD (180 aa)). Active-site residues include Arg-146, Lys-170, His-237, Arg-240, and His-263. Tyr-272 serves as the catalytic O-(3'-phospho-DNA)-tyrosine intermediate.

Belongs to the 'phage' integrase family. XerC subfamily. As to quaternary structure, forms a cyclic heterotetrameric complex composed of two molecules of XerC and two molecules of XerD.

It localises to the cytoplasm. In terms of biological role, site-specific tyrosine recombinase, which acts by catalyzing the cutting and rejoining of the recombining DNA molecules. The XerC-XerD complex is essential to convert dimers of the bacterial chromosome into monomers to permit their segregation at cell division. It also contributes to the segregational stability of plasmids. This is Tyrosine recombinase XerC from Pseudomonas aeruginosa (strain LESB58).